We begin with the raw amino-acid sequence, 49 residues long: Large ribosomal subunit protein bL33 (49 aa).

Belongs to the bacterial ribosomal protein bL33 family.

In Lactiplantibacillus plantarum (strain ATCC BAA-793 / NCIMB 8826 / WCFS1) (Lactobacillus plantarum), this protein is Large ribosomal subunit protein bL33.